A 351-amino-acid polypeptide reads, in one-letter code: Photosystem II D2 protein (351 aa).

A helical membrane pass occupies residues 39-59; sequence TAYLAIGGWLTGTTFVTSWYT. Histidine 116 is a binding site for chlorophyll a. A helical membrane pass occupies residues 123–139; sequence GFMLRQFEIARLVGIRP. The pheophytin a site is built by glutamine 128 and asparagine 141. A helical transmembrane segment spans residues 151-164; that stretch reads VFVSVFLMYPLGQS. Histidine 196 is a chlorophyll a binding site. A helical membrane pass occupies residues 206-226; the sequence is GALLCAIHGATVENTLFEDGE. 2 residues coordinate a plastoquinone: histidine 213 and phenylalanine 260. Histidine 213 provides a ligand contact to Fe cation. Histidine 267 provides a ligand contact to Fe cation. A helical transmembrane segment spans residues 277–293; the sequence is GLWTSSIGIIGLALNLR.

The protein belongs to the reaction center PufL/M/PsbA/D family. In terms of assembly, PSII is composed of 1 copy each of membrane proteins PsbA, PsbB, PsbC, PsbD, PsbE, PsbF, PsbH, PsbI, PsbJ, PsbK, PsbL, PsbM, PsbT, PsbX, PsbY, PsbZ, Psb30/Ycf12, peripheral proteins PsbO, CyanoQ (PsbQ), PsbU, PsbV and a large number of cofactors. It forms dimeric complexes. The D1/D2 heterodimer binds P680, chlorophylls that are the primary electron donor of PSII, and subsequent electron acceptors. It shares a non-heme iron and each subunit binds pheophytin, quinone, additional chlorophylls, carotenoids and lipids. There is also a Cl(-1) ion associated with D1 and D2, which is required for oxygen evolution. The PSII complex binds additional chlorophylls, carotenoids and specific lipids. is required as a cofactor.

It is found in the cellular thylakoid membrane. It catalyses the reaction 2 a plastoquinone + 4 hnu + 2 H2O = 2 a plastoquinol + O2. Its function is as follows. Photosystem II (PSII) is a light-driven water:plastoquinone oxidoreductase that uses light energy to abstract electrons from H(2)O, generating O(2) and a proton gradient subsequently used for ATP formation. It consists of a core antenna complex that captures photons, and an electron transfer chain that converts photonic excitation into a charge separation. The D1/D2 (PsbA/PsbD) reaction center heterodimer binds P680, the primary electron donor of PSII as well as several subsequent electron acceptors. D2 is needed for assembly of a stable PSII complex. The sequence is that of Photosystem II D2 protein from Parasynechococcus marenigrum (strain WH8102).